Here is a 151-residue protein sequence, read N- to C-terminus: Small ribosomal subunit protein uS19 (151 aa).

The protein belongs to the universal ribosomal protein uS19 family.

Protein S19 forms a complex with S13 that binds strongly to the 16S ribosomal RNA. This is Small ribosomal subunit protein uS19 from Picrophilus torridus (strain ATCC 700027 / DSM 9790 / JCM 10055 / NBRC 100828 / KAW 2/3).